An 80-amino-acid polypeptide reads, in one-letter code: Putative defensin-like protein 23 (80 aa).

Residues Met-1–Gly-25 form the signal peptide. Cystine bridges form between Cys-31–Cys-80, Cys-41–Cys-66, Cys-50–Cys-76, and Cys-54–Cys-78.

The protein belongs to the DEFL family.

The protein resides in the secreted. This chain is Putative defensin-like protein 23, found in Arabidopsis thaliana (Mouse-ear cress).